The primary structure comprises 180 residues: Hypoxanthine-guanine phosphoribosyltransferase (180 aa).

Residues lysine 43 and glycine 44 each contribute to the diphosphate site. Mg(2+) contacts are provided by glutamate 99 and aspartate 100. The active-site Proton acceptor is aspartate 103. GMP-binding positions include lysine 131, 152-153 (FV), and aspartate 159. Position 165 (arginine 165) interacts with diphosphate.

It belongs to the purine/pyrimidine phosphoribosyltransferase family. Mg(2+) is required as a cofactor.

The protein localises to the cytoplasm. The catalysed reaction is IMP + diphosphate = hypoxanthine + 5-phospho-alpha-D-ribose 1-diphosphate. The enzyme catalyses GMP + diphosphate = guanine + 5-phospho-alpha-D-ribose 1-diphosphate. The protein operates within purine metabolism; IMP biosynthesis via salvage pathway; IMP from hypoxanthine: step 1/1. It participates in purine metabolism; GMP biosynthesis via salvage pathway; GMP from guanine: step 1/1. Its function is as follows. Purine salvage pathway enzyme that catalyzes the transfer of the ribosyl-5-phosphate group from 5-phospho-alpha-D-ribose 1-diphosphate (PRPP) to the N9 position of the 6-oxopurines hypoxanthine and guanine to form the corresponding ribonucleotides IMP (inosine 5'-monophosphate) and GMP (guanosine 5'-monophosphate), with the release of PPi. The chain is Hypoxanthine-guanine phosphoribosyltransferase (hprT) from Bacillus subtilis (strain 168).